A 1860-amino-acid polypeptide reads, in one-letter code: Golgi-specific brefeldin A-resistance guanine nucleotide exchange factor 1 (1860 aa).

Positions 1 to 211 (MVDKNIYIIQ…EPKNYVGTNM (211 aa)) are DCB; DCB:DCB domain and DCB:HUS domain interaction. The interval 1-381 (MVDKNIYIIQ…SVHDMDYVNP (381 aa)) is interaction with RAB1B. Disordered stretches follow at residues 215–266 (KMRA…GGMP) and 281–372 (AASA…DSAS). Positions 227–241 (WKKQKRSPRPPRHMT) are enriched in basic residues. 3 stretches are compositionally biased toward polar residues: residues 250-262 (PTPN…SNLT), 290-301 (TDSGLEFSSQTT), and 335-351 (DLQQ…SASV). Phosphoserine occurs at positions 350 and 353. T508 is modified (phosphothreonine). Residues 531 to 551 (RIPSFVTELYINYDCDYYCSN) form an HUS; DCB:HUS domain interaction region. A compositionally biased stretch (basic and acidic residues) spans 620 to 631 (TREASNTERTAS). The interval 620–666 (TREASNTERTASDGKAVGMASDIPGLHLPGGGRLPPEHGKSGCSDLE) is disordered. At S663 the chain carries Phosphoserine. Positions 693 to 883 (ELIEIKNKKK…EDMYHAIKNE (191 aa)) constitute an SEC7 domain. Positions 887–1371 (MPEEQTGLVR…PSRPGPSPLI (485 aa)) are phosphatidylinositol-phosphate binding; required for translocation to the leading edge and for ARF1 activation upon GPCR signaling. The segment covering 1285-1297 (QATARADAPDAGA) has biased composition (low complexity). Residues 1285–1336 (QATARADAPDAGAQSDSELPSYHQNDVSLDRGYTSDSEVYTDHGRPGKIHRS) are disordered. Residues 1298–1311 (QSDSELPSYHQNDV) are compositionally biased toward polar residues. Position 1299 is a phosphoserine (S1299). Residue Y1317 is modified to Phosphotyrosine. A phosphoserine mark is found at S1319, S1321, and S1336. T1338 is modified (phosphothreonine; by AMPK). 3 disordered regions span residues 1351-1371 (GKDD…SPLI), 1431-1484 (CKSQ…DEGV), and 1726-1809 (PMPM…QPPL). A compositionally biased stretch (basic and acidic residues) spans 1433-1447 (SQEKRGKSHKYDSKG). Positions 1465–1474 (TSSQHASRGG) are enriched in polar residues. A phosphoserine mark is found at S1476, S1774, and S1785. The span at 1775–1792 (PRAASSSSPGSPVASSPS) shows a compositional bias: low complexity.

In terms of assembly, can form homodimers and probably homotetramers. Interacts with COPG1; the interaction is independent of ARF1 activation. Interacts with ARF1, ARF3, ARF4 and ARF5. Interacts with RAB1B (GTP-bound form); required for GBF1 membrane association. Interacts with GGA1, GGA2 and GGA3. Interacts with USO1. Interacts (via SEC7 domain) with PNPLA2 (via C-terminus); the interaction is direct. Interacts with ARMH3. (Microbial infection) Interacts with poliovirus protein 3A. Post-translationally, AMPK-mediated phosphorylation at Thr-1338 is induced by 2-deoxyglucose (2-DG) and AICA ribonucleotide, and occurs during mitosis leading to membrane disassociation and inactivation of ARF1 during mitosis. As to expression, ubiquitous.

It is found in the golgi apparatus. The protein resides in the cis-Golgi network. It localises to the endoplasmic reticulum-Golgi intermediate compartment. Its subcellular location is the trans-Golgi network. The protein localises to the cytoplasm. It is found in the lipid droplet. The protein resides in the membrane. Inhibited by brefeldin A (BFA). Inhibited by golgicide A (GCA). Functionally, guanine-nucleotide exchange factor (GEF) for members of the Arf family of small GTPases involved in trafficking in the early secretory pathway; its GEF activity initiates the coating of nascent vesicles via the localized generation of activated ARFs through replacement of GDP with GTP. Recruitment to cis-Golgi membranes requires membrane association of Arf-GDP and can be regulated by ARF1, ARF3, ARF4 and ARF5. Involved in the recruitment of the COPI coat complex to the endoplasmic reticulum exit sites (ERES), and the endoplasmic reticulum-Golgi intermediate (ERGIC) and cis-Golgi compartments which implicates ARF1 activation. Involved in COPI vesicle-dependent retrograde transport from the ERGIC and cis-Golgi compartments to the endoplasmic reticulum (ER). Involved in the trans-Golgi network recruitment of GGA1, GGA2, GGA3, BIG1, BIG2, and the AP-1 adaptor protein complex related to chlathrin-dependent transport; the function requires its GEF activity (probably at least in part on ARF4 and ARF5). Has GEF activity towards ARF1. Has in vitro GEF activity towards ARF5. Involved in the processing of PSAP. Required for the assembly of the Golgi apparatus. The AMPK-phosphorylated form is involved in Golgi disassembly during mitotis and under stress conditions. May be involved in the COPI vesicle-dependent recruitment of PNPLA2 to lipid droplets; however, this function is under debate. In neutrophils, involved in G protein-coupled receptor (GPCR)-mediated chemotaxis und superoxide production. Proposed to be recruited by phosphatidylinositol-phosphates generated upon GPCR stimulation to the leading edge where it recruits and activates ARF1, and is involved in recruitment of GIT2 and the NADPH oxidase complex. Plays a role in maintaining mitochondrial morphology. The sequence is that of Golgi-specific brefeldin A-resistance guanine nucleotide exchange factor 1 (GBF1) from Homo sapiens (Human).